The chain runs to 111 residues: ATP-dependent Clp protease adapter protein ClpS (111 aa).

Belongs to the ClpS family. In terms of assembly, binds to the N-terminal domain of the chaperone ClpA.

Functionally, involved in the modulation of the specificity of the ClpAP-mediated ATP-dependent protein degradation. This is ATP-dependent Clp protease adapter protein ClpS from Legionella pneumophila (strain Corby).